Reading from the N-terminus, the 162-residue chain is uncharacterized protein (162 aa).

This is an uncharacterized protein from Salmonella typhi.